The chain runs to 421 residues: Probable indole-3-pyruvate monooxygenase YUCCA9 (421 aa).

29 to 34 is an FAD binding site; sequence GAGPSG. NADP(+) is bound at residue 196–201; sequence GCGNSG.

This sequence belongs to the FMO family. It depends on FAD as a cofactor.

It carries out the reaction indole-3-pyruvate + NADPH + O2 + H(+) = (indol-3-yl)acetate + CO2 + NADP(+) + H2O. Its pathway is plant hormone metabolism; auxin biosynthesis. Involved in auxin biosynthesis. Belongs to the set of redundant YUCCA genes probably responsible for auxin biosynthesis in roots. This chain is Probable indole-3-pyruvate monooxygenase YUCCA9 (YUC9), found in Arabidopsis thaliana (Mouse-ear cress).